The following is a 63-amino-acid chain: Toxin Cn11 (63 aa).

The 62-residue stretch at 2–63 (RDGYPVDEKG…KVWTYETNTC (62 aa)) folds into the LCN-type CS-alpha/beta domain. Intrachain disulfides connect Cys12-Cys63, Cys16-Cys37, Cys23-Cys44, and Cys27-Cys46.

This sequence belongs to the long (4 C-C) scorpion toxin superfamily. Sodium channel inhibitor family. Expressed by the venom gland.

It localises to the secreted. First blocker of sodium channels (Nav) found in scorpions. Is lethal to crustaceans (Cambarellus montezumae), less toxic to insects (crickets) and non-toxic to mammals (mice) at the doses assayed. This Centruroides noxius (Mexican scorpion) protein is Toxin Cn11.